A 247-amino-acid polypeptide reads, in one-letter code: Anionic trypsin (247 aa).

Positions 1–15 (MHPLLILAFVGAAVA) are cleaved as a signal peptide. A propeptide spans 16–23 (FPSDDDDK) (activation peptide). Positions 24-244 (IVGGYTCAEN…YVDWIQETIA (221 aa)) constitute a Peptidase S1 domain. Cystine bridges form between Cys30-Cys160, Cys48-Cys64, Cys132-Cys233, Cys139-Cys206, Cys171-Cys185, and Cys196-Cys220. His63 acts as the Charge relay system in catalysis. Ca(2+) is bound by residues Glu75, Asn77, Val80, and Glu85. Asp107 (charge relay system) is an active-site residue. Catalysis depends on Ser200, which acts as the Charge relay system.

It belongs to the peptidase S1 family. The cofactor is Ca(2+). In terms of processing, not sulfated on tyrosine residue(s).

It is found in the secreted. The protein resides in the extracellular space. The catalysed reaction is Preferential cleavage: Arg-|-Xaa, Lys-|-Xaa.. In Bos taurus (Bovine), this protein is Anionic trypsin.